Reading from the N-terminus, the 418-residue chain is NADH-quinone oxidoreductase subunit D (418 aa).

This sequence belongs to the complex I 49 kDa subunit family. As to quaternary structure, NDH-1 is composed of 14 different subunits. Subunits NuoB, C, D, E, F, and G constitute the peripheral sector of the complex.

The protein resides in the cell inner membrane. The enzyme catalyses a quinone + NADH + 5 H(+)(in) = a quinol + NAD(+) + 4 H(+)(out). In terms of biological role, NDH-1 shuttles electrons from NADH, via FMN and iron-sulfur (Fe-S) centers, to quinones in the respiratory chain. The immediate electron acceptor for the enzyme in this species is believed to be ubiquinone. Couples the redox reaction to proton translocation (for every two electrons transferred, four hydrogen ions are translocated across the cytoplasmic membrane), and thus conserves the redox energy in a proton gradient. This Bordetella avium (strain 197N) protein is NADH-quinone oxidoreductase subunit D.